The chain runs to 473 residues: Ribulose bisphosphate carboxylase large chain (473 aa).

Substrate is bound by residues Asn-116 and Thr-166. Lys-168 (proton acceptor) is an active-site residue. Position 170 (Lys-170) interacts with substrate. Mg(2+) is bound by residues Lys-194, Asp-196, and Glu-197. Lys-194 is subject to N6-carboxylysine. The active-site Proton acceptor is His-287. 3 residues coordinate substrate: Arg-288, His-320, and Ser-372.

It belongs to the RuBisCO large chain family. Type I subfamily. In terms of assembly, heterohexadecamer of 8 large chains and 8 small chains. It depends on Mg(2+) as a cofactor.

The catalysed reaction is 2 (2R)-3-phosphoglycerate + 2 H(+) = D-ribulose 1,5-bisphosphate + CO2 + H2O. The enzyme catalyses D-ribulose 1,5-bisphosphate + O2 = 2-phosphoglycolate + (2R)-3-phosphoglycerate + 2 H(+). RuBisCO catalyzes two reactions: the carboxylation of D-ribulose 1,5-bisphosphate, the primary event in carbon dioxide fixation, as well as the oxidative fragmentation of the pentose substrate. Both reactions occur simultaneously and in competition at the same active site. This chain is Ribulose bisphosphate carboxylase large chain, found in Thiomonas intermedia (strain K12) (Thiobacillus intermedius).